Consider the following 300-residue polypeptide: NAD kinase (300 aa).

Catalysis depends on Asp75, which acts as the Proton acceptor. Residues 75–76 (DG), 149–150 (ND), Arg177, Asp179, 190–195 (TAYALS), Ala214, and Gln248 each bind NAD(+).

Belongs to the NAD kinase family. The cofactor is a divalent metal cation.

Its subcellular location is the cytoplasm. The catalysed reaction is NAD(+) + ATP = ADP + NADP(+) + H(+). Functionally, involved in the regulation of the intracellular balance of NAD and NADP, and is a key enzyme in the biosynthesis of NADP. Catalyzes specifically the phosphorylation on 2'-hydroxyl of the adenosine moiety of NAD to yield NADP. The polypeptide is NAD kinase (Burkholderia lata (strain ATCC 17760 / DSM 23089 / LMG 22485 / NCIMB 9086 / R18194 / 383)).